Consider the following 490-residue polypeptide: MADNQTTAAEPTNGRVTRVQGSVIDVEFPVGHLPDIYNALKVTIVNTGAKEEGEAKETEITLEVEQHLGDSTVRCVALKPTDGLVRGASVSDTGVPISVPVGDVTKGHVFDVSGNILNKKPDETITVSERWPIHRNPPAFDQLESKTQMFETGIKVIDLLTPYVQGGKIGLFGGAGVGKTVLIQEMIQRVAQNHGGVSVFAGVGERTREGNDLIGEMAEAGVLEKTALVFGQMDEQPGTRLRVPLTALTMAEYFRDVQNQDVLLFIDNIFRFTQAGSEVSTLLGRMPSAVGYQPNLADEMGSLQERITSTRGHSITSLQAIYVPADDYTDPAPATTFAHLDATTELSRDIASKGIYPAVDPLSSTSRILDPRYVGQAHYDCANRVKAILQRNKELQDIIALIGIDELSEEDKTTVNRARKIEQFLGQNFYVAEKFTGRPGSYVPADETIEAFTRICDGVYDDVPEQAFSGIGGIDDLEEKWHNMQKELGA.

ATP is bound at residue 173–180; that stretch reads GGAGVGKT.

The protein belongs to the ATPase alpha/beta chains family. In terms of assembly, F-type ATPases have 2 components, CF(1) - the catalytic core - and CF(0) - the membrane proton channel. CF(1) has five subunits: alpha(3), beta(3), gamma(1), delta(1), epsilon(1). CF(0) has three main subunits: a(1), b(2) and c(9-12). The alpha and beta chains form an alternating ring which encloses part of the gamma chain. CF(1) is attached to CF(0) by a central stalk formed by the gamma and epsilon chains, while a peripheral stalk is formed by the delta and b chains.

It localises to the cell membrane. The catalysed reaction is ATP + H2O + 4 H(+)(in) = ADP + phosphate + 5 H(+)(out). Its function is as follows. Produces ATP from ADP in the presence of a proton gradient across the membrane. The catalytic sites are hosted primarily by the beta subunits. This chain is ATP synthase subunit beta, found in Bifidobacterium longum subsp. infantis (strain ATCC 15697 / DSM 20088 / JCM 1222 / NCTC 11817 / S12).